The primary structure comprises 248 residues: 3,4-dihydroxyphthalate decarboxylase (248 aa).

Residue E90 is the Proton donor/acceptor of the active site. E90, H109, H111, and H177 together coordinate a divalent metal cation.

It belongs to the aldolase class II family. The cofactor is a divalent metal cation.

The enzyme catalyses 3,4-dihydroxyphthalate + H(+) = 3,4-dihydroxybenzoate + CO2. The protein operates within xenobiotic degradation; phthalate degradation. Functionally, catalyzes the decarboxylation of 3,4-dihydroxyphthalate to protocatechuate (3,4-dihydroxybenzoate) during phthalate metabolism. The protein is 3,4-dihydroxyphthalate decarboxylase of Arthrobacter keyseri.